The sequence spans 122 residues: Small ribosomal subunit protein uS13 (122 aa).

The interval 97 to 122 (PVRGQRTHTNARTRKGPAKAIAGKKK) is disordered.

This sequence belongs to the universal ribosomal protein uS13 family. As to quaternary structure, part of the 30S ribosomal subunit. Forms a loose heterodimer with protein S19. Forms two bridges to the 50S subunit in the 70S ribosome.

In terms of biological role, located at the top of the head of the 30S subunit, it contacts several helices of the 16S rRNA. In the 70S ribosome it contacts the 23S rRNA (bridge B1a) and protein L5 of the 50S subunit (bridge B1b), connecting the 2 subunits; these bridges are implicated in subunit movement. Contacts the tRNAs in the A and P-sites. This chain is Small ribosomal subunit protein uS13, found in Brucella anthropi (strain ATCC 49188 / DSM 6882 / CCUG 24695 / JCM 21032 / LMG 3331 / NBRC 15819 / NCTC 12168 / Alc 37) (Ochrobactrum anthropi).